We begin with the raw amino-acid sequence, 185 residues long: Putative gustatory receptor clone PTE01 (185 aa).

Residues 1–11 (MYLFLSNLSLA) traverse the membrane as a helical segment. Residues 12 to 42 (DISFTSTTLPKMIVDIQTNNRAISYSGCLTQ) are Extracellular-facing. A helical transmembrane segment spans residues 43 to 62 (MSFFMLFGCLDSLLLTAMAY). At 63–84 (DRFVAICHPLHYQVIMNPRLCG) the chain is on the cytoplasmic side. The helical transmembrane segment at 85 to 105 (LLVFLSILISLLVSQLHNSVV) threads the bilayer. The Extracellular portion of the chain corresponds to 106–138 (LQLTYFKSVDISHFFCDPSLLLNLACSDTFTNN). The helical transmembrane segment at 139-160 (IVMYFVGAISGFLPISGIFFSY) threads the bilayer. Over 161–182 (YKIVSSILRMPSPGGKYKAFST) the chain is Cytoplasmic. The helical transmembrane segment at 183–185 (CGS) threads the bilayer.

It belongs to the G-protein coupled receptor 1 family. Tongue specific.

It is found in the cell membrane. Possible taste receptor. The polypeptide is Putative gustatory receptor clone PTE01 (Rattus norvegicus (Rat)).